A 62-amino-acid chain; its full sequence is MSETIVNCPTCNQDVIWKPESKYRPFCSERCQLIDLGEWANEEKRIAAVENDVMTSDLEGHY.

Residues C8, C11, C27, and C31 each coordinate Zn(2+).

Belongs to the DNA gyrase inhibitor YacG family. In terms of assembly, interacts with GyrB. Requires Zn(2+) as cofactor.

In terms of biological role, inhibits all the catalytic activities of DNA gyrase by preventing its interaction with DNA. Acts by binding directly to the C-terminal domain of GyrB, which probably disrupts DNA binding by the gyrase. The sequence is that of DNA gyrase inhibitor YacG from Actinobacillus pleuropneumoniae serotype 5b (strain L20).